The following is a 254-amino-acid chain: ATP-dependent L-serine kinase SbnI (254 aa).

The active site involves glutamate 20. ADP is bound at residue serine 33. Isoleucine 57 contributes to the O-phospho-L-serine binding site. Positions 58, 59, 61, and 62 each coordinate ADP. The O-phospho-L-serine site is built by glycine 59 and histidine 61. Positions 98 and 229 each coordinate O-phospho-L-serine.

In terms of assembly, forms dimers and tetramers in solution. Predominantly forms dimers. Dimerization/oligomerization is not essential for kinase activity.

The catalysed reaction is L-serine + ATP = O-phospho-L-serine + ADP + H(+). It functions in the pathway siderophore biosynthesis. Its activity is regulated as follows. Binds heme and heme binding inhibits DNA binding. Free serine kinase that uses ATP to phosphorylate L-serine to yield O-phospho-L-serine and ADP. O-phospho-L-serine serves as a substrate for SbnA and is a precursor for staphyloferrin B biosynthesis. Is also a DNA-binding regulatory protein that senses heme to control gene expression for siderophore biosynthesis. Binds to DNA within the sbnC coding region and is required for expression of genes in the sbn operon from sbnD onward. This Staphylococcus aureus (strain NCTC 8325 / PS 47) protein is ATP-dependent L-serine kinase SbnI.